We begin with the raw amino-acid sequence, 91 residues long: Small ribosomal subunit protein uS19 (91 aa).

Belongs to the universal ribosomal protein uS19 family.

Its function is as follows. Protein S19 forms a complex with S13 that binds strongly to the 16S ribosomal RNA. In Synechococcus sp. (strain CC9311), this protein is Small ribosomal subunit protein uS19.